The chain runs to 303 residues: Putative S-adenosyl-L-methionine-dependent methyltransferase ML2020 (303 aa).

S-adenosyl-L-methionine is bound by residues Asp130 and 159–160 (DL).

Belongs to the UPF0677 family.

In terms of biological role, exhibits S-adenosyl-L-methionine-dependent methyltransferase activity. This Mycobacterium leprae (strain TN) protein is Putative S-adenosyl-L-methionine-dependent methyltransferase ML2020.